The following is a 436-amino-acid chain: MGKNIVVLGAQWGDEGKGKIVDLLTERAKYVVRYQGGHNAGHTLISKGKKTVLHLIPSGILRNNTINIIGNGVVLEPHALIKEIKELEMQGVPVRNRLLLSAACPLILPYHVALDNEREKARGSKAIGTTGRGIGPAYEDKVARRALRLGDLFNQITFESQLKEVIEYHNFQLVHYYKAEPVHYQRVVESIWGIADILKNMVIDVTQVLSQAREKAENLLFEGAQGTFLDIDHGTYPYVTSSNTTAGSVATGAGFGPLYIDYILGIVKAYSTRVGAGPFPTELNDETGNFLRDKGHEYGATTGRSRRTGWLDAVSLRQAIQMNSLSGLCMTKLDVLDGLKTVKICVRYKRTDGTETMSTPITSAEWAEVEPIYEALPGWKESTFGIKEKSQLPQTALNYIKRVEELTGVPVDIISTGPDREETIILRHPFDEMIKK.

Residues 13-19 (GDEGKGK) and 41-43 (GHT) contribute to the GTP site. The active-site Proton acceptor is Asp14. Residues Asp14 and Gly41 each contribute to the Mg(2+) site. IMP contacts are provided by residues 14-17 (DEGK), 39-42 (NAGH), Thr130, Arg144, Gln225, Thr240, and Arg304. His42 functions as the Proton donor in the catalytic mechanism. 300–306 (ATTGRSR) provides a ligand contact to substrate. Residues Arg306, 332-334 (KLD), and 415-417 (STG) each bind GTP.

The protein belongs to the adenylosuccinate synthetase family. As to quaternary structure, homodimer. It depends on Mg(2+) as a cofactor.

It is found in the cytoplasm. It carries out the reaction IMP + L-aspartate + GTP = N(6)-(1,2-dicarboxyethyl)-AMP + GDP + phosphate + 2 H(+). The protein operates within purine metabolism; AMP biosynthesis via de novo pathway; AMP from IMP: step 1/2. Plays an important role in the de novo pathway of purine nucleotide biosynthesis. Catalyzes the first committed step in the biosynthesis of AMP from IMP. This chain is Adenylosuccinate synthetase, found in Hamiltonella defensa subsp. Acyrthosiphon pisum (strain 5AT).